The primary structure comprises 309 residues: 4-hydroxy-3-methylbut-2-enyl diphosphate reductase (309 aa).

Cys12 provides a ligand contact to [4Fe-4S] cluster. His41 and His74 together coordinate (2E)-4-hydroxy-3-methylbut-2-enyl diphosphate. Dimethylallyl diphosphate contacts are provided by His41 and His74. The isopentenyl diphosphate site is built by His41 and His74. Cys96 is a binding site for [4Fe-4S] cluster. Position 124 (His124) interacts with (2E)-4-hydroxy-3-methylbut-2-enyl diphosphate. His124 serves as a coordination point for dimethylallyl diphosphate. An isopentenyl diphosphate-binding site is contributed by His124. The active-site Proton donor is the Glu126. Residue Thr167 participates in (2E)-4-hydroxy-3-methylbut-2-enyl diphosphate binding. Cys197 contacts [4Fe-4S] cluster. (2E)-4-hydroxy-3-methylbut-2-enyl diphosphate-binding residues include Ser225, Ser226, Asn227, and Ser269. Residues Ser225, Ser226, Asn227, and Ser269 each coordinate dimethylallyl diphosphate. Isopentenyl diphosphate-binding residues include Ser225, Ser226, Asn227, and Ser269.

The protein belongs to the IspH family. [4Fe-4S] cluster is required as a cofactor.

The catalysed reaction is isopentenyl diphosphate + 2 oxidized [2Fe-2S]-[ferredoxin] + H2O = (2E)-4-hydroxy-3-methylbut-2-enyl diphosphate + 2 reduced [2Fe-2S]-[ferredoxin] + 2 H(+). It carries out the reaction dimethylallyl diphosphate + 2 oxidized [2Fe-2S]-[ferredoxin] + H2O = (2E)-4-hydroxy-3-methylbut-2-enyl diphosphate + 2 reduced [2Fe-2S]-[ferredoxin] + 2 H(+). Its pathway is isoprenoid biosynthesis; dimethylallyl diphosphate biosynthesis; dimethylallyl diphosphate from (2E)-4-hydroxy-3-methylbutenyl diphosphate: step 1/1. It functions in the pathway isoprenoid biosynthesis; isopentenyl diphosphate biosynthesis via DXP pathway; isopentenyl diphosphate from 1-deoxy-D-xylulose 5-phosphate: step 6/6. Its function is as follows. Catalyzes the conversion of 1-hydroxy-2-methyl-2-(E)-butenyl 4-diphosphate (HMBPP) into a mixture of isopentenyl diphosphate (IPP) and dimethylallyl diphosphate (DMAPP). Acts in the terminal step of the DOXP/MEP pathway for isoprenoid precursor biosynthesis. The polypeptide is 4-hydroxy-3-methylbut-2-enyl diphosphate reductase (Pseudoalteromonas translucida (strain TAC 125)).